The following is a 118-amino-acid chain: uncharacterized protein (118 aa).

Transmembrane regions (helical) follow at residues 6–26, 43–63, and 84–104; these read ILIL…PFMV, ALSC…IHVL, and IFKV…VLVQ.

Belongs to the AzlD/HI_1737/HP1330 family.

Its subcellular location is the cell membrane. This is an uncharacterized protein from Helicobacter pylori (strain J99 / ATCC 700824) (Campylobacter pylori J99).